A 537-amino-acid polypeptide reads, in one-letter code: Aminopeptidase Y (537 aa).

An N-terminal signal peptide occupies residues 1–21 (MHFSLKQLAVAAFYATNLGSA). Residues 22–56 (YVIPQFFQEAFQQEEPIENYLPQLNDDDSSAVAAN) constitute a propeptide that is removed on maturation. 5 N-linked (GlcNAc...) asparagine glycosylation sites follow: asparagine 85, asparagine 96, asparagine 115, asparagine 150, and asparagine 162. Residues histidine 314 and aspartate 326 each coordinate Zn(2+). The Proton acceptor role is filled by glutamate 358. Position 359 (glutamate 359) interacts with Zn(2+). A glycan (N-linked (GlcNAc...) asparagine) is linked at asparagine 371. Position 387 (aspartate 387) interacts with Zn(2+). Asparagine 427 carries an N-linked (GlcNAc...) asparagine glycan. Histidine 472 contributes to the Zn(2+) binding site. The N-linked (GlcNAc...) asparagine glycan is linked to asparagine 480.

The protein belongs to the peptidase M28 family. M28A subfamily. As to quaternary structure, monomer. The cofactor is Zn(2+).

It localises to the vacuole. It catalyses the reaction Preferentially, release of N-terminal lysine.. The polypeptide is Aminopeptidase Y (APE3) (Saccharomyces cerevisiae (strain ATCC 204508 / S288c) (Baker's yeast)).